The primary structure comprises 138 residues: Ribulose bisphosphate carboxylase small subunit (138 aa).

Belongs to the RuBisCO small chain family. As to quaternary structure, heterohexadecamer of 8 large and 8 small subunits.

Its subcellular location is the plastid. It localises to the chloroplast. Functionally, ruBisCO catalyzes two reactions: the carboxylation of D-ribulose 1,5-bisphosphate, the primary event in carbon dioxide fixation, as well as the oxidative fragmentation of the pentose substrate in the photorespiration process. Both reactions occur simultaneously and in competition at the same active site. Although the small subunit is not catalytic it is essential for maximal activity. The chain is Ribulose bisphosphate carboxylase small subunit from Antithamnion sp. (Red alga).